A 149-amino-acid polypeptide reads, in one-letter code: Nucleoside diphosphate kinase (149 aa).

ATP is bound by residues lysine 9, phenylalanine 57, arginine 85, threonine 91, arginine 102, and asparagine 112. The active-site Pros-phosphohistidine intermediate is the histidine 115.

Belongs to the NDK family. It depends on Mg(2+) as a cofactor.

It localises to the cytoplasm. It carries out the reaction a 2'-deoxyribonucleoside 5'-diphosphate + ATP = a 2'-deoxyribonucleoside 5'-triphosphate + ADP. The enzyme catalyses a ribonucleoside 5'-diphosphate + ATP = a ribonucleoside 5'-triphosphate + ADP. In terms of biological role, major role in the synthesis of nucleoside triphosphates other than ATP. The ATP gamma phosphate is transferred to the NDP beta phosphate via a ping-pong mechanism, using a phosphorylated active-site intermediate. This chain is Nucleoside diphosphate kinase, found in Methanocorpusculum labreanum (strain ATCC 43576 / DSM 4855 / Z).